A 147-amino-acid chain; its full sequence is Myoglobin (147 aa).

Ala2 bears the N-acetylalanine mark. The region spanning 2–141 is the Globin domain; it reads ADFDAVLKCW…IIADLEANYK (140 aa). His60 is a binding site for nitrite. His60 is an O2 binding site. Residue His89 coordinates heme b.

The protein belongs to the globin family. Monomeric.

The protein localises to the cytoplasm. It is found in the sarcoplasm. It catalyses the reaction Fe(III)-heme b-[protein] + nitric oxide + H2O = Fe(II)-heme b-[protein] + nitrite + 2 H(+). The catalysed reaction is H2O2 + AH2 = A + 2 H2O. Its function is as follows. Monomeric heme protein which primary function is to store oxygen and facilitate its diffusion within muscle tissues. Reversibly binds oxygen through a pentacoordinated heme iron and enables its timely and efficient release as needed during periods of heightened demand. Depending on the oxidative conditions of tissues and cells, and in addition to its ability to bind oxygen, it also has a nitrite reductase activity whereby it regulates the production of bioactive nitric oxide. Under stress conditions, like hypoxia and anoxia, it also protects cells against reactive oxygen species thanks to its pseudoperoxidase activity. This Thunnus albacares (Yellowfin tuna) protein is Myoglobin (mb).